The sequence spans 141 residues: Hemoglobin subunit alpha-1/2 (141 aa).

The Globin domain maps to 1 to 141 (VLSAABKSBV…VSTVLTSKYR (141 aa)). S3 is modified (phosphoserine). An N6-succinyllysine mark is found at K7 and K11. An N6-acetyllysine; alternate modification is found at K16. K16 carries the post-translational modification N6-succinyllysine; alternate. Phosphotyrosine is present on Y24. Position 35 is a phosphoserine (S35). At K40 the chain carries N6-succinyllysine. Phosphoserine is present on S49. H58 is an O2 binding site. H87 is a heme b binding site. A Phosphoserine modification is found at S102. T108 is subject to Phosphothreonine. S124 carries the phosphoserine modification. A phosphothreonine mark is found at T134 and T137. A Phosphoserine modification is found at S138.

This sequence belongs to the globin family. As to quaternary structure, heterotetramer of two alpha chains and two beta chains. Red blood cells.

Its function is as follows. Involved in oxygen transport from the lung to the various peripheral tissues. The chain is Hemoglobin subunit alpha-1/2 from Odocoileus virginianus virginianus (Virginia white-tailed deer).